The chain runs to 306 residues: Elongation factor Ts (306 aa).

Positions 80 to 83 are involved in Mg(2+) ion dislocation from EF-Tu; sequence TDFV.

The protein belongs to the EF-Ts family.

The protein resides in the cytoplasm. In terms of biological role, associates with the EF-Tu.GDP complex and induces the exchange of GDP to GTP. It remains bound to the aminoacyl-tRNA.EF-Tu.GTP complex up to the GTP hydrolysis stage on the ribosome. The chain is Elongation factor Ts from Clostridium novyi (strain NT).